The sequence spans 84 residues: M-zodatoxin-Lt2a (84 aa).

The N-terminal stretch at 1 to 22 (MKYFVIALALAVALVCIAESTA) is a signal peptide. The propeptide occupies 23-58 (YEVNEELENELDDLDDAAWLAVAEELQGLEDFEESR). The short motif at 55–58 (EESR) is the Processing quadruplet motif element.

Cleavage of the propeptide depends on the processing quadruplet motif (XXXR, with at least one of X being E). Expressed by the venom gland.

It localises to the secreted. Its function is as follows. It has antimicrobial activity against Gram-positive bacteria (A.globiformis VKM Ac-1112 (MIC=0.7 uM), and B.subtilis VKM B-501 (MIC=0.4 uM)), Gram-negative bacteria (E.coli DH5-alpha (MIC=1.0 uM), E.coli MH1 (MIC=0.7 uM), and P.aeruginosa PAO1 (MIC=6.7 uM)), and yeasts (P.pastoris GS115 (MIC=6.7 uM), and S.cerevisiae Y190 (MIC=54 uM)). Also has a strong hemolytic activity against rabbit erythrocytes. Causes paralysis, but is not lethal when injected into insect (M.domestica) larvae. The polypeptide is M-zodatoxin-Lt2a (Lachesana tarabaevi (Spider)).